The chain runs to 2193 residues: Genome polyprotein (2193 aa).

The interval 1–23 (MGSQVSTQRSGSHENSNSASEGS) is disordered. Gly-2 carries the N-myristoyl glycine; by host lipid modification. At 2–1503 (GSQVSTQRSG…HLNRAVLVMQ (1502 aa)) the chain is on the cytoplasmic side. An amphipathic alpha-helix region spans residues 566–588 (GDPIADMIDQTVNNQVNRSLTAL). Active-site for protease 2A activity residues include His-883 and Asp-901. Zn(2+)-binding residues include Cys-918 and Cys-920. Residue Cys-972 is the For protease 2A activity of the active site. Residues Cys-978 and His-980 each coordinate Zn(2+). A membrane-binding region spans residues 1112 to 1184 (SASWLKKFND…EQSAASQEDL (73 aa)). The interval 1112 to 1250 (SASWLKKFND…SPGTGKSLAT (139 aa)) is oligomerization. The interval 1133-1137 (SSKIS) is RNA-binding. The SF3 helicase domain maps to 1216-1374 (EKRMNNYMQF…YKTDLGRLDA (159 aa)). Residue 1240–1247 (GSPGTGKS) participates in ATP binding. Zn(2+) is bound by residues Cys-1381, Cys-1392, and Cys-1397. The C4-type; degenerate zinc finger occupies 1381 to 1397 (CTENNTANFKRCSPLVC). The RNA-binding stretch occupies residues 1424–1431 (EYNNRSAI). The tract at residues 1435 to 1440 (IEALFQ) is oligomerization. An intramembrane segment occupies 1504-1519 (SIATVVAVVSLVYVIY). The Cytoplasmic portion of the chain corresponds to 1520–2193 (KLFAGFQGAY…NLRRNWLELF (674 aa)). Tyr-1529 carries the O-(5'-phospho-RNA)-tyrosine modification. In terms of domain architecture, Peptidase C3 spans 1549 to 1727 (GPSLDFALSL…FCAGLKRGYF (179 aa)). Catalysis depends on for protease 3C activity residues His-1588, Glu-1619, and Cys-1695. The RdRp catalytic domain maps to 1958–2074 (GSLFAFDYSG…SYPFPIDCSE (117 aa)). Asp-1964 and Asp-2060 together coordinate Mg(2+).

It belongs to the picornaviruses polyprotein family. As to quaternary structure, interacts with capsid protein VP1 and capsid protein VP3 to form heterotrimeric protomers. In terms of assembly, interacts with capsid protein VP0, and capsid protein VP3 to form heterotrimeric protomers. Five protomers subsequently associate to form pentamers which serve as building blocks for the capsid. Interacts with capsid protein VP2, capsid protein VP3 and capsid protein VP4 following cleavage of capsid protein VP0. Interacts with capsid protein VP1 and capsid protein VP3 in the mature capsid. As to quaternary structure, interacts with capsid protein VP0 and capsid protein VP1 to form heterotrimeric protomers. Five protomers subsequently associate to form pentamers which serve as building blocks for the capsid. Interacts with capsid protein VP4 in the mature capsid. Interacts with protein 2C; this interaction may be important for virion morphogenesis. In terms of assembly, interacts with capsid protein VP1 and capsid protein VP3. Homodimer. As to quaternary structure, homohexamer; forms a hexameric ring structure with 6-fold symmetry characteristic of AAA+ ATPases. Interacts (via N-terminus) with host RTN3 (via reticulon domain); this interaction is important for viral replication. Interacts with capsid protein VP3; this interaction may be important for virion morphogenesis. In terms of assembly, interacts with protein 3CD. Homodimer. Interacts with host GBF1. Interacts (via GOLD domain) with host ACBD3 (via GOLD domain); this interaction allows the formation of a viral protein 3A/ACBD3 heterotetramer with a 2:2 stoichiometry, which will stimulate the recruitment of host PI4KB in order to synthesize PI4P at the viral RNA replication sites. As to quaternary structure, interacts with RNA-directed RNA polymerase. In terms of assembly, interacts with host IFIH1/MDA5; this interaction inhibits host IFIH1. Protein 3CD: Interacts with protein 3AB and with RNA-directed RNA polymerase. As to quaternary structure, interacts with Viral protein genome-linked and with protein 3CD. It depends on Mg(2+) as a cofactor. Post-translationally, specific enzymatic cleavages in vivo by the viral proteases yield processing intermediates and the mature proteins. Myristoylation is required for the formation of pentamers during virus assembly. Further assembly of 12 pentamers and a molecule of genomic RNA generates the provirion. In terms of processing, during virion maturation, immature virions are rendered infectious following cleavage of VP0 into VP4 and VP2. This maturation seems to be an autocatalytic event triggered by the presence of RNA in the capsid and it is followed by a conformational change infectious virion. Post-translationally, myristoylation is required during RNA encapsidation and formation of the mature virus particle. VPg is uridylylated by the polymerase into VPg-pUpU. This acts as a nucleotide-peptide primer for the genomic RNA replication.

It is found in the virion. The protein localises to the host cytoplasm. The protein resides in the host cytoplasmic vesicle membrane. Its subcellular location is the host nucleus. The catalysed reaction is a ribonucleoside 5'-triphosphate + H2O = a ribonucleoside 5'-diphosphate + phosphate + H(+). It catalyses the reaction Selective cleavage of Tyr-|-Gly bond in the picornavirus polyprotein.. The enzyme catalyses RNA(n) + a ribonucleoside 5'-triphosphate = RNA(n+1) + diphosphate. It carries out the reaction Selective cleavage of Gln-|-Gly bond in the poliovirus polyprotein. In other picornavirus reactions Glu may be substituted for Gln, and Ser or Thr for Gly.. Replication or transcription is subject to high level of random mutations by the nucleotide analog ribavirin. Forms an icosahedral capsid of pseudo T=3 symmetry with capsid proteins VP2 and VP3. The capsid is 300 Angstroms in diameter, composed of 60 copies of each capsid protein and enclosing the viral positive strand RNA genome. Capsid protein VP1 mainly forms the vertices of the capsid. Capsid protein VP1 interacts with host cell receptor to provide virion attachment to target host cells. This attachment induces virion internalization. After binding to its receptor, the capsid undergoes conformational changes. Capsid protein VP1 N-terminus (that contains an amphipathic alpha-helix) and capsid protein VP4 are externalized. Together, they shape a pore in the host membrane through which viral genome is translocated to host cell cytoplasm. In terms of biological role, forms an icosahedral capsid of pseudo T=3 symmetry with capsid proteins VP2 and VP3. The capsid is 300 Angstroms in diameter, composed of 60 copies of each capsid protein and enclosing the viral positive strand RNA genome. Its function is as follows. Lies on the inner surface of the capsid shell. After binding to the host receptor, the capsid undergoes conformational changes. Capsid protein VP4 is released, Capsid protein VP1 N-terminus is externalized, and together, they shape a pore in the host membrane through which the viral genome is translocated into the host cell cytoplasm. Functionally, component of immature procapsids, which is cleaved into capsid proteins VP4 and VP2 after maturation. Allows the capsid to remain inactive before the maturation step. Cysteine protease that cleaves viral polyprotein and specific host proteins. It is responsible for the autocatalytic cleavage between the P1 and P2 regions, which is the first cleavage occurring in the polyprotein. Also cleaves the host translation initiation factor EIF4G1, in order to shut down the capped cellular mRNA translation. Inhibits the host nucleus-cytoplasm protein and RNA trafficking by cleaving host members of the nuclear pores. Counteracts stress granule formation probably by antagonizing its assembly or promoting its dissassembly. Cleaves and inhibits host IFIH1/MDA5, thereby inhibiting the type-I IFN production and the establishment of the antiviral state. Cleaves and inhibits host MAVS, thereby inhibiting the type-I IFN production and the establishment of the antiviral state. In terms of biological role, plays an essential role in the virus replication cycle by acting as a viroporin. Creates a pore in the host endoplasmic reticulum and as a consequence releases Ca2+ in the cytoplasm of infected cell. In turn, high levels of cytoplasmic calcium may trigger membrane trafficking and transport of viral ER-associated proteins to viroplasms, sites of viral genome replication. Its function is as follows. Induces and associates with structural rearrangements of intracellular membranes. Displays RNA-binding, nucleotide binding and NTPase activities. May play a role in virion morphogenesis and viral RNA encapsidation by interacting with the capsid protein VP3. Functionally, localizes the viral replication complex to the surface of membranous vesicles. Together with protein 3CD binds the Cis-Active RNA Element (CRE) which is involved in RNA synthesis initiation. Acts as a cofactor to stimulate the activity of 3D polymerase, maybe through a nucleid acid chaperone activity. Localizes the viral replication complex to the surface of membranous vesicles. It inhibits host cell endoplasmic reticulum-to-Golgi apparatus transport and causes the disassembly of the Golgi complex, possibly through GBF1 interaction. This would result in depletion of MHC, trail receptors and IFN receptors at the host cell surface. Plays an essential role in viral RNA replication by recruiting ACBD3 and PI4KB at the viral replication sites, thereby allowing the formation of the rearranged membranous structures where viral replication takes place. In terms of biological role, acts as a primer for viral RNA replication and remains covalently bound to viral genomic RNA. VPg is uridylylated prior to priming replication into VPg-pUpU. The oriI viral genomic sequence may act as a template for this. The VPg-pUpU is then used as primer on the genomic RNA poly(A) by the RNA-dependent RNA polymerase to replicate the viral genome. During genome replication, the VPg-RNA linkage is removed by the host TDP2, thereby accelerating replication. During the late stage of the replication cycle, host TDP2 is excluded from sites of viral RNA synthesis and encapsidation, allowing for the generation of progeny virions. Its function is as follows. Involved in the viral replication complex and viral polypeptide maturation. It exhibits protease activity with a specificity and catalytic efficiency that is different from protease 3C. Protein 3CD lacks polymerase activity. Protein 3CD binds to the 5'UTR of the viral genome. Functionally, major viral protease that mediates proteolytic processing of the polyprotein. Cleaves host EIF5B, contributing to host translation shutoff. Also cleaves host PABPC1, contributing to host translation shutoff. Binds and inhibits host IFIH1/MDA5, thereby inhibiting the type-I IFN production and the establishment of the antiviral state. Cleaves host MAP3K7/TAK1, resulting in inhibition of TRAF6-triggered NF-kappa-B induction. Cleaves host NLRP1, triggers host N-glycine-mediated degradation of the autoinhibitory NLRP1 N-terminal fragment. Replicates the viral genomic RNA on the surface of intracellular membranes. May form linear arrays of subunits that propagate along a strong head-to-tail interaction called interface-I. Covalently attaches UMP to a tyrosine of VPg, which is used to prime RNA synthesis. The positive stranded RNA genome is first replicated at virus induced membranous vesicles, creating a dsRNA genomic replication form. This dsRNA is then used as template to synthesize positive stranded RNA genomes. ss(+)RNA genomes are either translated, replicated or encapsidated. The sequence is that of Genome polyprotein from Homo sapiens (Human).